The following is a 293-amino-acid chain: Group 3 late-embryogenesis abundant protein, mitochondrial (293 aa).

Residues 1-31 (MFLARNAGRAGYRGVVAYQQAASFSVSSAKA) constitute a mitochondrion transit peptide. Positions 27–43 (SSAKAAGSRSSGGSDAG) are enriched in low complexity. Residues 27–52 (SSAKAAGSRSSGGSDAGDYAREAAEH) form a disordered region. LEA 11-mer repeat repeat units lie at residues 58 to 68 (KDLKNEASWKA), 83 to 93 (KDTVKEGVHDM), 123 to 133 (KNAAQDTAATL), 134 to 144 (KDKAGSAWNQA), 145 to 155 (KHVVEDKGEDV), 160 to 170 (KDTASKVWGKA), 171 to 181 (KHVAEDVKENA), 199 to 209 (KDKAADVLSGA), and 210 to 220 (KHTAENLAHKA). The tract at residues 217-293 (AHKAQAAIHD…KGPGQAGGRR (77 aa)) is disordered. Residues 230-265 (SSGSQSQSQSQSQYRQGQQQGRQDQQQSKSQWGQTS) are compositionally biased toward low complexity. Residues 279–293 (GPQGGKGPGQAGGRR) show a composition bias toward gly residues.

This sequence belongs to the LEA type 4 family.

The protein resides in the mitochondrion. Its function is as follows. Mitochondrial heat soluble protein acting as a molecular shield in water-deficient condition. In Ramazzottius varieornatus (Water bear), this protein is Group 3 late-embryogenesis abundant protein, mitochondrial.